Reading from the N-terminus, the 395-residue chain is Tyrosine--tRNA ligase (395 aa).

A 'HIGH' region motif is present at residues Pro42–His51. The 'KMSKS' region motif lies at Lys226 to Ser230. Lys229 contacts ATP. Residues Ile334 to Val394 form the S4 RNA-binding domain.

It belongs to the class-I aminoacyl-tRNA synthetase family. TyrS type 2 subfamily. As to quaternary structure, homodimer.

Its subcellular location is the cytoplasm. It carries out the reaction tRNA(Tyr) + L-tyrosine + ATP = L-tyrosyl-tRNA(Tyr) + AMP + diphosphate + H(+). Functionally, catalyzes the attachment of tyrosine to tRNA(Tyr) in a two-step reaction: tyrosine is first activated by ATP to form Tyr-AMP and then transferred to the acceptor end of tRNA(Tyr). This chain is Tyrosine--tRNA ligase, found in Mannheimia succiniciproducens (strain KCTC 0769BP / MBEL55E).